Reading from the N-terminus, the 469-residue chain is 3-isopropylmalate dehydratase large subunit (469 aa).

[4Fe-4S] cluster contacts are provided by cysteine 349, cysteine 409, and cysteine 412.

This sequence belongs to the aconitase/IPM isomerase family. LeuC type 1 subfamily. As to quaternary structure, heterodimer of LeuC and LeuD. [4Fe-4S] cluster is required as a cofactor.

It carries out the reaction (2R,3S)-3-isopropylmalate = (2S)-2-isopropylmalate. The protein operates within amino-acid biosynthesis; L-leucine biosynthesis; L-leucine from 3-methyl-2-oxobutanoate: step 2/4. Catalyzes the isomerization between 2-isopropylmalate and 3-isopropylmalate, via the formation of 2-isopropylmaleate. The sequence is that of 3-isopropylmalate dehydratase large subunit from Methylorubrum populi (strain ATCC BAA-705 / NCIMB 13946 / BJ001) (Methylobacterium populi).